Reading from the N-terminus, the 1024-residue chain is Beta-galactosidase (1024 aa).

Substrate is bound by residues Asn-103 and Asp-202. Asp-202 provides a ligand contact to Na(+). 3 residues coordinate Mg(2+): Glu-417, His-419, and Glu-462. Residues Glu-462 and 538–541 (EYAH) contribute to the substrate site. Glu-462 serves as the catalytic Proton donor. The active-site Nucleophile is the Glu-538. Mg(2+) is bound at residue Asn-598. Residues Phe-602 and Asn-605 each coordinate Na(+). The substrate site is built by Asn-605 and Trp-1000.

It belongs to the glycosyl hydrolase 2 family. As to quaternary structure, homotetramer. It depends on Mg(2+) as a cofactor. Na(+) is required as a cofactor.

The catalysed reaction is Hydrolysis of terminal non-reducing beta-D-galactose residues in beta-D-galactosides.. This chain is Beta-galactosidase, found in Klebsiella pneumoniae.